A 317-amino-acid chain; its full sequence is UV DNA damage endonuclease (317 aa).

The protein belongs to the uve1/UvsE family.

In terms of biological role, component in a DNA repair pathway. Removal of UV LIGHT damaged nucleotides. Recognizes pyrimidine dimers and cleave a phosphodiester bond immediately 5' to the lesion. The polypeptide is UV DNA damage endonuclease (Bacillus cereus (strain B4264)).